The following is a 707-amino-acid chain: Drebrin (707 aa).

At Ala2 the chain carries N-acetylalanine. One can recognise an ADF-H domain in the interval 3–134 (GVSFSGHRLE…DAGAIGQRLS (132 aa)). A phosphoserine mark is found at Ser141 and Ser142. Residues 209–236 (ERMEQERQEQEERERRYREREQQIEEHR) are compositionally biased toward basic and acidic residues. Disordered stretches follow at residues 209-438 (ERME…VCKE), 452-497 (AEEP…TSVA), 531-557 (WPGN…AEAS), 582-609 (LLNF…PLAA), and 630-707 (LEPE…EGGD). Phosphoserine is present on Ser241. A compositionally biased stretch (basic and acidic residues) spans 288-298 (DNPREFFRQQE). The span at 329–343 (SDSGPSSSSSSSSSP) shows a compositional bias: low complexity. Position 342 is a phosphoserine (Ser342). Residues 355–364 (RTPNLSSSLP) show a composition bias toward polar residues. Phosphothreonine occurs at positions 377 and 381. A compositionally biased stretch (polar residues) spans 380–395 (PTRSPSDSSTASTPIT). Ser383, Ser385, and Ser391 each carry phosphoserine. Position 392 is a phosphothreonine (Thr392). Over residues 409-420 (QPPPPPPPPPPA) the composition is skewed to pro residues. The segment covering 428–438 (PRLDGEEVCKE) has biased composition (basic and acidic residues). Ser467 bears the Phosphoserine mark. Phosphothreonine is present on Thr549. The span at 639–652 (NGETTQKEGTQQAS) shows a compositional bias: polar residues. At Ser659 the chain carries Phosphoserine. The segment covering 695-707 (PVPEEEEGFEGGD) has biased composition (acidic residues).

In terms of assembly, interacts with RUFY. Interacts with CXCR4; this interaction is enhanced by antigenic stimulation. Interacts (via ADF-H domain) with ZMYND8 (via N-terminus); the interaction leads to sequestering of ZMYND8 in the cytoplasm. Post-translationally, ISGylated. As to expression, brain neurons.

The protein resides in the cytoplasm. Its subcellular location is the cell projection. It localises to the dendrite. It is found in the cell cortex. The protein localises to the cell junction. The protein resides in the growth cone. Its function is as follows. Actin cytoskeleton-organizing protein that plays a role in the formation of cell projections. Required for actin polymerization at immunological synapses (IS) and for the recruitment of the chemokine receptor CXCR4 to IS. Plays a role in dendritic spine morphogenesis and organization, including the localization of the dopamine receptor DRD1 to the dendritic spines. Involved in memory-related synaptic plasticity in the hippocampus. This is Drebrin (Dbn1) from Rattus norvegicus (Rat).